A 418-amino-acid polypeptide reads, in one-letter code: L-rhamnose isomerase (418 aa).

Residues histidine 262, aspartate 294, and aspartate 296 each contribute to the Mn(2+) site.

This sequence belongs to the rhamnose isomerase family. In terms of assembly, homotetramer. It depends on Mn(2+) as a cofactor.

It localises to the cytoplasm. The enzyme catalyses L-rhamnopyranose = L-rhamnulose. It functions in the pathway carbohydrate degradation; L-rhamnose degradation; glycerone phosphate from L-rhamnose: step 1/3. In terms of biological role, catalyzes the interconversion of L-rhamnose and L-rhamnulose. The protein is L-rhamnose isomerase of Yersinia pestis bv. Antiqua (strain Antiqua).